Consider the following 694-residue polypeptide: DNA-directed RNA polymerase subunit beta' (694 aa).

Cysteine 69, cysteine 71, cysteine 87, and cysteine 90 together coordinate Zn(2+). Mg(2+)-binding residues include aspartate 489, aspartate 491, and aspartate 493.

This sequence belongs to the RNA polymerase beta' chain family. RpoC1 subfamily. In plastids the minimal PEP RNA polymerase catalytic core is composed of four subunits: alpha, beta, beta', and beta''. When a (nuclear-encoded) sigma factor is associated with the core the holoenzyme is formed, which can initiate transcription. Mg(2+) serves as cofactor. It depends on Zn(2+) as a cofactor.

It localises to the plastid. It is found in the chloroplast. The enzyme catalyses RNA(n) + a ribonucleoside 5'-triphosphate = RNA(n+1) + diphosphate. DNA-dependent RNA polymerase catalyzes the transcription of DNA into RNA using the four ribonucleoside triphosphates as substrates. The protein is DNA-directed RNA polymerase subunit beta' of Gossypium barbadense (Sea Island cotton).